A 47-amino-acid polypeptide reads, in one-letter code: Small, acid-soluble spore protein K (47 aa).

The disordered stretch occupies residues 1 to 47 (MRNKAHGFPHRISFDGEPDRAKHASKRANGTINTKPQERMHQANPDQ). The segment covering 12 to 22 (ISFDGEPDRAK) has biased composition (basic and acidic residues).

Belongs to the SspK family.

It is found in the spore core. The chain is Small, acid-soluble spore protein K from Halalkalibacterium halodurans (strain ATCC BAA-125 / DSM 18197 / FERM 7344 / JCM 9153 / C-125) (Bacillus halodurans).